A 262-amino-acid chain; its full sequence is Conserved oligomeric Golgi complex subunit 2 (262 aa).

Component of the conserved oligomeric Golgi (COG or Sec34/Sec35) complex which consists of eight different proteins COG1-COG8. The COG complex interacts with the Rab GTPase YPT1, the Glogi SNAREs GOS1, SEC22, SED5, VTI1 and YKT6 and the COPI coatomer subunit gamma SEC21.

It is found in the golgi apparatus membrane. Acts as a component of the peripheral membrane COG complex that is involved in intra-Golgi protein trafficking. COG is located at the cis-Golgi, and regulates tethering of retrograde intra-Golgi vesicles and possibly a number of other membrane trafficking events. COG2 is required for ER to Golgi vesicle docking. Not essential for viability. This is Conserved oligomeric Golgi complex subunit 2 (COG2) from Saccharomyces cerevisiae (strain ATCC 204508 / S288c) (Baker's yeast).